A 135-amino-acid chain; its full sequence is FK506-binding protein 2 (135 aa).

Positions 1–17 (MLLKSLFLLFLTAIAFA) are cleaved as a signal peptide. Positions 40–127 (GDLISVHYEG…VFVAELVDIA (88 aa)) constitute a PPIase FKBP-type domain. A Prevents secretion from ER motif is present at residues 132–135 (HDEL).

It belongs to the FKBP-type PPIase family. FKBP2 subfamily.

The protein resides in the endoplasmic reticulum. It catalyses the reaction [protein]-peptidylproline (omega=180) = [protein]-peptidylproline (omega=0). With respect to regulation, inhibited by both FK506 and rapamycin. In terms of biological role, PPIases accelerate the folding of proteins. It catalyzes the cis-trans isomerization of proline imidic peptide bonds in oligopeptides. The polypeptide is FK506-binding protein 2 (FPR2) (Debaryomyces hansenii (strain ATCC 36239 / CBS 767 / BCRC 21394 / JCM 1990 / NBRC 0083 / IGC 2968) (Yeast)).